Reading from the N-terminus, the 367-residue chain is Ribosomal lysine N-methyltransferase 5 (367 aa).

Positions 55-74 (EGGRKKKRVRRRNKASSVEE) are disordered. Positions 58–68 (RKKKRVRRRNK) are enriched in basic residues. Residues Trp110, 170–172 (GAG), Asp192, Trp256, and Met288 contribute to the S-adenosyl-L-methionine site.

This sequence belongs to the class I-like SAM-binding methyltransferase superfamily. RKM5 family.

Functionally, S-adenosyl-L-methionine-dependent protein-lysine N-methyltransferase that monomethylates 60S ribosomal protein L1 (RPL1A and RPL1B) at 'Lys-46'. The chain is Ribosomal lysine N-methyltransferase 5 (RKM5) from Saccharomyces cerevisiae (strain RM11-1a) (Baker's yeast).